The sequence spans 211 residues: Prolactin-3C1 (211 aa).

Positions 1–29 (MQLSLTQARTWKGLLLLVSCMILWISVTP) are cleaved as a signal peptide. Residues asparagine 77 and asparagine 173 are each glycosylated (N-linked (GlcNAc...) asparagine). Cysteine 80 and cysteine 187 are joined by a disulfide.

Belongs to the somatotropin/prolactin family. As to expression, expressed exclusively in decidual tissue.

The protein localises to the secreted. The chain is Prolactin-3C1 (Prl3c1) from Rattus norvegicus (Rat).